Here is a 136-residue protein sequence, read N- to C-terminus: Large ribosomal subunit protein uL16 (136 aa).

It belongs to the universal ribosomal protein uL16 family. Part of the 50S ribosomal subunit.

Its function is as follows. Binds 23S rRNA and is also seen to make contacts with the A and possibly P site tRNAs. The protein is Large ribosomal subunit protein uL16 of Bradyrhizobium diazoefficiens (strain JCM 10833 / BCRC 13528 / IAM 13628 / NBRC 14792 / USDA 110).